Reading from the N-terminus, the 137-residue chain is Probable Hsp20 family chaperone (137 aa).

The sHSP domain maps to 25 to 137 (LTNNNNIMKT…PKEKHYIKLN (113 aa)).

Belongs to the small heat shock protein (HSP20) family.

Functionally, probable chaperone. This Onion yellows phytoplasma (strain OY-M) protein is Probable Hsp20 family chaperone.